Here is a 215-residue protein sequence, read N- to C-terminus: Transcription factor LAX PANICLE 1 (215 aa).

The interval 1–48 is disordered; that stretch reads MHDPRGFPIHPQPYHLHPTAGGLGEGRMRGGGRRRPGAKLSTDPQSVA. The tract at residues 40-53 is basic motif; degenerate; that stretch reads LSTDPQSVAARERR. The bHLH domain maps to 40–89; that stretch reads LSTDPQSVAARERRHRISDRFRVLRSLVPGGSKMDTVSMLEQAIHYVKFL. The segment at 54–89 is helix-loop-helix motif; it reads HRISDRFRVLRSLVPGGSKMDTVSMLEQAIHYVKFL.

This sequence belongs to the bHLH protein family. As to quaternary structure, efficient DNA binding requires dimerization with another bHLH protein. Interacts with LAX2. Expressed in the boundary between the shoot apical meristem (SAM) and the region of new meristem formation.

Its subcellular location is the nucleus. Functionally, transcription factor that seems to regulate organogenesis in postembryonic development. Involved in the regulation of shoot branching by controlling axillary meristem initiation. Functions in association with LAX2 to regulate the process of AM formation. Possesses transactivation activity in yeast. This is Transcription factor LAX PANICLE 1 from Oryza sativa subsp. japonica (Rice).